A 271-amino-acid polypeptide reads, in one-letter code: MTLLTVKHLTITDTWTDQPLVSDVNFTLTKGETLGVIGESGSGKSITCKSIIGLNPERLGVTGEIIFDGTSMLSLSESQRKKYRGKDIAMVMQQGSRAFDPSTTVGKQMFETMKVHTSMSTQEIEKTLIEYMDYLSLKDPKRILKSYPYMLSGGMLQRLMIALALALKPKLIIADEPTTALDTITQYDVLEAFIDIKKHFDCAMIFISHDLTVINKIADRVVVMKNGQLIEHGTRESVLHHPEHVYTKYLLSTKKKINDHFKHVMRGDVHD.

Residues 6–251 (VKHLTITDTW…PEHVYTKYLL (246 aa)) form the ABC transporter domain. 38–45 (GESGSGKS) lines the ATP pocket.

The protein belongs to the ABC transporter superfamily. In terms of assembly, the complex is composed of two ATP-binding proteins (CntD and CntF), two transmembrane proteins (CntB and CntC) and a solute-binding protein (CntA).

It localises to the cell membrane. Functionally, part of the ABC transporter complex CntABCDF (Opp1) involved in the uptake of metal in complex with the metallophore staphylopine (StP). May be involved in the import of a large array of divalent metals ions such as nickel, cobalt, zinc, copper and iron. Probably responsible for energy coupling to the transport system. The chain is Metal-staphylopine import system ATP-binding protein CntD from Staphylococcus aureus (strain Mu50 / ATCC 700699).